Reading from the N-terminus, the 861-residue chain is APC membrane recruitment protein 3 (861 aa).

8 disordered regions span residues 1–77, 179–206, 261–289, 351–415, 514–558, 576–644, 716–742, and 786–822; these read MELK…PKGG, AEGKSLPSPGDPSDPGGRRSKAFLPPGE, PSLELNEGPESPTQAAQGLESKVPRGPLQ, PLCP…FPRD, RGPT…GGAT, GLLA…SQKE, MLEQKQSSSSPSMTTIHGLPYSASTQD, and AHGSQLDSEPRSAPAARWSSQGHHPESLGLTLNSQQE. Positions 362–384 are enriched in polar residues; it reads SKASSIDTGTPKSEQPESVSTSD. The segment covering 518–530 has biased composition (pro residues); sequence PRAPPTPGQPAAP. Residues 584 to 595 are compositionally biased toward low complexity; the sequence is ALGGATQGTGTL. Basic and acidic residues predominate over residues 598–609; it reads DASREEETRGHS. Polar residues-rich tracts occupy residues 615–629 and 719–730; these read SMESAATSTTDTSGK and QKQSSSSPSMTT.

The protein belongs to the Amer family.

The protein resides in the cell membrane. Regulator of the canonical Wnt signaling pathway. Acts by specifically binding phosphatidylinositol 4,5-bisphosphate (PtdIns(4,5)P2), translocating to the cell membrane. This chain is APC membrane recruitment protein 3 (AMER3), found in Homo sapiens (Human).